The following is a 226-amino-acid chain: Transcriptional regulatory protein CitT (226 aa).

The Response regulatory domain maps to 3–119; the sequence is HIAIAEDDFR…KFRQVLLQYK (117 aa). Position 54 is a 4-aspartylphosphate (D54). Positions 178 to 197 form a DNA-binding region, H-T-H motif; that stretch reads AEELGEKMGASRTTARRYAE.

In terms of processing, phosphorylated by CitS.

It localises to the cytoplasm. Functionally, member of the two-component regulatory system CitT/CitS. Regulates the expression of the citM-yflN operon. Phosphorylated CitT binds to the citM promoter to activate the transcription of the citM-yflN operon. This is Transcriptional regulatory protein CitT (citT) from Bacillus subtilis (strain 168).